The following is a 398-amino-acid chain: Stearoyl-[acyl-carrier-protein] 9-desaturase, chloroplastic (398 aa).

The transit peptide at 1–34 (MALKLHHTAFNPSMAVTSSGLPRSYHLRSHRVFM) directs the protein to the chloroplast. The disordered stretch occupies residues 46–66 (IPNAKKPHMPPREAHVQKTHS). Positions 140, 178, 181, 231, 264, and 267 each coordinate Fe cation.

The protein belongs to the fatty acid desaturase type 2 family. As to quaternary structure, homodimer. Fe(2+) serves as cofactor.

It localises to the plastid. The protein localises to the chloroplast. It carries out the reaction octadecanoyl-[ACP] + 2 reduced [2Fe-2S]-[ferredoxin] + O2 + 2 H(+) = (9Z)-octadecenoyl-[ACP] + 2 oxidized [2Fe-2S]-[ferredoxin] + 2 H2O. The protein operates within lipid metabolism; fatty acid metabolism. In terms of biological role, converts stearoyl-ACP to oleoyl-ACP by introduction of a cis double bond between carbons 9 and 10 of the acyl chain. The sequence is that of Stearoyl-[acyl-carrier-protein] 9-desaturase, chloroplastic from Simmondsia chinensis (Jojoba).